Here is a 322-residue protein sequence, read N- to C-terminus: Malate dehydrogenase 1 (322 aa).

NAD(+) is bound by residues 10 to 15 (GSGQIG) and D34. Positions 83 and 89 each coordinate substrate. NAD(+) is bound by residues N96 and 119–121 (ITN). The substrate site is built by N121 and R152. The Proton acceptor role is filled by H176.

Belongs to the LDH/MDH superfamily. MDH type 3 family.

The catalysed reaction is (S)-malate + NAD(+) = oxaloacetate + NADH + H(+). Functionally, catalyzes the reversible oxidation of malate to oxaloacetate. The polypeptide is Malate dehydrogenase 1 (Rhodopseudomonas palustris (strain BisB18)).